Here is a 246-residue protein sequence, read N- to C-terminus: DNA-directed RNA polymerase subunit alpha (246 aa).

The protein belongs to the RNA polymerase alpha chain family. In plastids the minimal PEP RNA polymerase catalytic core is composed of four subunits: alpha, beta, beta', and beta''. When a (nuclear-encoded) sigma factor is associated with the core the holoenzyme is formed, which can initiate transcription (Potential).

The protein localises to the plastid. It carries out the reaction RNA(n) + a ribonucleoside 5'-triphosphate = RNA(n+1) + diphosphate. DNA-dependent RNA polymerase catalyzes the transcription of DNA into RNA using the four ribonucleoside triphosphates as substrates. In Helicosporidium sp. subsp. Simulium jonesii (Green alga), this protein is DNA-directed RNA polymerase subunit alpha (rpoA).